The primary structure comprises 105 residues: Translation initiation factor 1A (105 aa).

One can recognise an S1-like domain in the interval 12–87; sequence TRVRTPREEN…QKCDIIWRYT (76 aa).

It belongs to the eIF-1A family.

In terms of biological role, seems to be required for maximal rate of protein biosynthesis. Enhances ribosome dissociation into subunits and stabilizes the binding of the initiator Met-tRNA(I) to 40 S ribosomal subunits. This chain is Translation initiation factor 1A (eIF1A), found in Methanococcus aeolicus (strain ATCC BAA-1280 / DSM 17508 / OCM 812 / Nankai-3).